The sequence spans 230 residues: Phosphatidylserine decarboxylase proenzyme (230 aa).

The active-site Schiff-base intermediate with substrate; via pyruvic acid is the S186. At S186 the chain carries Pyruvic acid (Ser); by autocatalysis.

It belongs to the phosphatidylserine decarboxylase family. PSD-A subfamily. In terms of assembly, heterodimer of a large membrane-associated beta subunit and a small pyruvoyl-containing alpha subunit. The cofactor is pyruvate. Is synthesized initially as an inactive proenzyme. Formation of the active enzyme involves a self-maturation process in which the active site pyruvoyl group is generated from an internal serine residue via an autocatalytic post-translational modification. Two non-identical subunits are generated from the proenzyme in this reaction, and the pyruvate is formed at the N-terminus of the alpha chain, which is derived from the carboxyl end of the proenzyme. The post-translation cleavage follows an unusual pathway, termed non-hydrolytic serinolysis, in which the side chain hydroxyl group of the serine supplies its oxygen atom to form the C-terminus of the beta chain, while the remainder of the serine residue undergoes an oxidative deamination to produce ammonia and the pyruvoyl prosthetic group on the alpha chain.

It localises to the cell membrane. The enzyme catalyses a 1,2-diacyl-sn-glycero-3-phospho-L-serine + H(+) = a 1,2-diacyl-sn-glycero-3-phosphoethanolamine + CO2. It participates in phospholipid metabolism; phosphatidylethanolamine biosynthesis; phosphatidylethanolamine from CDP-diacylglycerol: step 2/2. Catalyzes the formation of phosphatidylethanolamine (PtdEtn) from phosphatidylserine (PtdSer). This is Phosphatidylserine decarboxylase proenzyme from Wolbachia sp. subsp. Brugia malayi (strain TRS).